Reading from the N-terminus, the 268-residue chain is NH(3)-dependent NAD(+) synthetase (268 aa).

Residue 45–52 (GLSGGIDS) participates in ATP binding. A Mg(2+)-binding site is contributed by D51. R129 serves as a coordination point for deamido-NAD(+). Residue T149 coordinates ATP. E154 is a binding site for Mg(2+). Deamido-NAD(+) contacts are provided by K162 and D169. 2 residues coordinate ATP: K178 and T200. Deamido-NAD(+) is bound at residue 260 to 261 (HK).

This sequence belongs to the NAD synthetase family. In terms of assembly, homodimer.

It carries out the reaction deamido-NAD(+) + NH4(+) + ATP = AMP + diphosphate + NAD(+) + H(+). The protein operates within cofactor biosynthesis; NAD(+) biosynthesis; NAD(+) from deamido-NAD(+) (ammonia route): step 1/1. Functionally, catalyzes the ATP-dependent amidation of deamido-NAD to form NAD. Uses ammonia as a nitrogen source. The sequence is that of NH(3)-dependent NAD(+) synthetase from Halobacterium salinarum (strain ATCC 29341 / DSM 671 / R1).